The primary structure comprises 385 residues: Chaperone protein DnaJ (385 aa).

The region spanning 5–70 (DFYDVLGVSR…QSRAAYDQFG (66 aa)) is the J domain. A CR-type zinc finger spans residues 143–221 (GKKAQVRVPG…CHGAGRVEKE (79 aa)). Positions 156, 159, 173, 176, 195, 198, 209, and 212 each coordinate Zn(2+). CXXCXGXG motif repeat units lie at residues 156–163 (CEVCTGTG), 173–180 (CPTCQGHG), 195–202 (CPTCHGRG), and 209–216 (CTNCHGAG).

It belongs to the DnaJ family. In terms of assembly, homodimer. Zn(2+) is required as a cofactor.

It is found in the cytoplasm. Functionally, participates actively in the response to hyperosmotic and heat shock by preventing the aggregation of stress-denatured proteins and by disaggregating proteins, also in an autonomous, DnaK-independent fashion. Unfolded proteins bind initially to DnaJ; upon interaction with the DnaJ-bound protein, DnaK hydrolyzes its bound ATP, resulting in the formation of a stable complex. GrpE releases ADP from DnaK; ATP binding to DnaK triggers the release of the substrate protein, thus completing the reaction cycle. Several rounds of ATP-dependent interactions between DnaJ, DnaK and GrpE are required for fully efficient folding. Also involved, together with DnaK and GrpE, in the DNA replication of plasmids through activation of initiation proteins. This is Chaperone protein DnaJ from Parvibaculum lavamentivorans (strain DS-1 / DSM 13023 / NCIMB 13966).